The sequence spans 911 residues: Nitrate reductase [NADH], clone PBNBR1412 (911 aa).

The disordered stretch occupies residues 53-72; the sequence is NDAVDDSYDSSDDEDESHNR. Over residues 56 to 68 the composition is skewed to acidic residues; that stretch reads VDDSYDSSDDEDE. C191 provides a ligand contact to Mo-molybdopterin. One can recognise a Cytochrome b5 heme-binding domain in the interval 539 to 614; that stretch reads AKMYSMSEVR…LEDYRIGELI (76 aa). H574 and H597 together coordinate heme. Residues 654–766 form the FAD-binding FR-type domain; sequence REKVPVTLIE…KGPLGHIEYL (113 aa). Residues 706–709, 723–727, F728, F735, 740–742, and T793 contribute to the FAD site; these read RAYT, VVKVY, and LMS.

Belongs to the nitrate reductase family. As to quaternary structure, homodimer. The cofactor is FAD. It depends on heme as a cofactor. Mo-molybdopterin is required as a cofactor.

It catalyses the reaction nitrite + NAD(+) + H2O = nitrate + NADH + H(+). In terms of biological role, nitrate reductase is a key enzyme involved in the first step of nitrate assimilation in plants, fungi and bacteria. This is Nitrate reductase [NADH], clone PBNBR1412 (NIA2) from Brassica napus (Rape).